The following is a 315-amino-acid chain: Acetyl-coenzyme A carboxylase carboxyl transferase subunit alpha (315 aa).

Residues 39-293 (RLQDKSSTLT…RADLIEQLDM (255 aa)) enclose the CoA carboxyltransferase C-terminal domain.

Belongs to the AccA family. Acetyl-CoA carboxylase is a heterohexamer composed of biotin carboxyl carrier protein (AccB), biotin carboxylase (AccC) and two subunits each of ACCase subunit alpha (AccA) and ACCase subunit beta (AccD).

It is found in the cytoplasm. It carries out the reaction N(6)-carboxybiotinyl-L-lysyl-[protein] + acetyl-CoA = N(6)-biotinyl-L-lysyl-[protein] + malonyl-CoA. It participates in lipid metabolism; malonyl-CoA biosynthesis; malonyl-CoA from acetyl-CoA: step 1/1. In terms of biological role, component of the acetyl coenzyme A carboxylase (ACC) complex. First, biotin carboxylase catalyzes the carboxylation of biotin on its carrier protein (BCCP) and then the CO(2) group is transferred by the carboxyltransferase to acetyl-CoA to form malonyl-CoA. The chain is Acetyl-coenzyme A carboxylase carboxyl transferase subunit alpha from Pseudomonas entomophila (strain L48).